The primary structure comprises 337 residues: tRNA N6-adenosine threonylcarbamoyltransferase (337 aa).

Fe cation-binding residues include histidine 111 and histidine 115. Substrate-binding positions include 134-138 (LVSGG), aspartate 167, glycine 180, and asparagine 272. Fe cation is bound at residue aspartate 300.

This sequence belongs to the KAE1 / TsaD family. It depends on Fe(2+) as a cofactor.

It localises to the cytoplasm. It carries out the reaction L-threonylcarbamoyladenylate + adenosine(37) in tRNA = N(6)-L-threonylcarbamoyladenosine(37) in tRNA + AMP + H(+). Its function is as follows. Required for the formation of a threonylcarbamoyl group on adenosine at position 37 (t(6)A37) in tRNAs that read codons beginning with adenine. Is involved in the transfer of the threonylcarbamoyl moiety of threonylcarbamoyl-AMP (TC-AMP) to the N6 group of A37, together with TsaE and TsaB. TsaD likely plays a direct catalytic role in this reaction. This chain is tRNA N6-adenosine threonylcarbamoyltransferase, found in Escherichia coli O139:H28 (strain E24377A / ETEC).